A 446-amino-acid polypeptide reads, in one-letter code: Probable cytosolic iron-sulfur protein assembly protein 1 (446 aa).

7 WD repeats span residues 17 to 59 (AFKP…AHSN), 63 to 106 (GHTR…PLEE), 143 to 182 (GHEN…EGDD), 192 to 241 (EHDG…EWAC), 247 to 291 (GHSS…PEAS), 330 to 368 (VHTR…NPST), and 398 to 446 (GHGP…SIEL). Residues 106–128 (EGTKKGESTEIDVTRRRNNNDSD) show a composition bias toward basic and acidic residues. The segment at 106-133 (EGTKKGESTEIDVTRRRNNNDSDKDNDD) is disordered.

This sequence belongs to the WD repeat CIA1 family.

Its function is as follows. Essential component of the cytosolic iron-sulfur (Fe/S) protein assembly machinery. Required for the maturation of extramitochondrial Fe/S proteins. This Pyricularia oryzae (strain 70-15 / ATCC MYA-4617 / FGSC 8958) (Rice blast fungus) protein is Probable cytosolic iron-sulfur protein assembly protein 1.